The primary structure comprises 48 residues: Small, acid-soluble spore protein P (48 aa).

The segment covering 1–12 (MTNKNTSKDMHK) has biased composition (basic and acidic residues). The segment at 1–48 (MTNKNTSKDMHKNAPKGHNPGQPEPLSGSKKVKNRNHTRQKHNTSHDM) is disordered. Residues 30-48 (KKVKNRNHTRQKHNTSHDM) are compositionally biased toward basic residues.

The protein belongs to the SspP family.

The protein resides in the spore core. This Bacillus velezensis (strain DSM 23117 / BGSC 10A6 / LMG 26770 / FZB42) (Bacillus amyloliquefaciens subsp. plantarum) protein is Small, acid-soluble spore protein P.